A 570-amino-acid polypeptide reads, in one-letter code: Dihydroxy-acid dehydratase (570 aa).

Cys61 serves as a coordination point for [2Fe-2S] cluster. Asp94 contacts Mg(2+). Residue Cys135 coordinates [2Fe-2S] cluster. Mg(2+) is bound by residues Asp136 and Lys137. An N6-carboxylysine modification is found at Lys137. Cys207 is a binding site for [2Fe-2S] cluster. Glu459 serves as a coordination point for Mg(2+). Catalysis depends on Ser485, which acts as the Proton acceptor.

Belongs to the IlvD/Edd family. Homodimer. Requires [2Fe-2S] cluster as cofactor. Mg(2+) serves as cofactor.

It catalyses the reaction (2R)-2,3-dihydroxy-3-methylbutanoate = 3-methyl-2-oxobutanoate + H2O. The catalysed reaction is (2R,3R)-2,3-dihydroxy-3-methylpentanoate = (S)-3-methyl-2-oxopentanoate + H2O. It functions in the pathway amino-acid biosynthesis; L-isoleucine biosynthesis; L-isoleucine from 2-oxobutanoate: step 3/4. It participates in amino-acid biosynthesis; L-valine biosynthesis; L-valine from pyruvate: step 3/4. Its function is as follows. Functions in the biosynthesis of branched-chain amino acids. Catalyzes the dehydration of (2R,3R)-2,3-dihydroxy-3-methylpentanoate (2,3-dihydroxy-3-methylvalerate) into 2-oxo-3-methylpentanoate (2-oxo-3-methylvalerate) and of (2R)-2,3-dihydroxy-3-methylbutanoate (2,3-dihydroxyisovalerate) into 2-oxo-3-methylbutanoate (2-oxoisovalerate), the penultimate precursor to L-isoleucine and L-valine, respectively. In Lactococcus lactis subsp. lactis (strain IL1403) (Streptococcus lactis), this protein is Dihydroxy-acid dehydratase.